The sequence spans 517 residues: Type II methyltransferase M.CeqI (517 aa).

Disordered regions lie at residues methionine 1–arginine 21 and glycine 33–serine 62. A compositionally biased stretch (basic residues) spans arginine 51–serine 62. TPR repeat units lie at residues alanine 283–asparagine 316, alanine 361–serine 394, and serine 476–methionine 509.

It catalyses the reaction a 2'-deoxyadenosine in DNA + S-adenosyl-L-methionine = an N(6)-methyl-2'-deoxyadenosine in DNA + S-adenosyl-L-homocysteine + H(+). Its function is as follows. A methylase, recognizes the double-stranded sequence 5'-GATATC-3', methylates A-? on both strands, and protects the DNA from cleavage by the CeqI endonuclease. The polypeptide is Type II methyltransferase M.CeqI (ceqIM) (Rhodococcus hoagii (Corynebacterium equii)).